Here is a 134-residue protein sequence, read N- to C-terminus: DNA-directed RNA polymerase subunit omega (134 aa).

Belongs to the RNA polymerase subunit omega family. As to quaternary structure, the RNAP catalytic core consists of 2 alpha, 1 beta, 1 beta' and 1 omega subunit. When a sigma factor is associated with the core the holoenzyme is formed, which can initiate transcription.

The catalysed reaction is RNA(n) + a ribonucleoside 5'-triphosphate = RNA(n+1) + diphosphate. Promotes RNA polymerase assembly. Latches the N- and C-terminal regions of the beta' subunit thereby facilitating its interaction with the beta and alpha subunits. This Rhizobium etli (strain CIAT 652) protein is DNA-directed RNA polymerase subunit omega.